The chain runs to 428 residues: Adenylosuccinate synthetase (428 aa).

Residues 12-18 (GDEGKGK) and 40-42 (GHT) each bind GTP. The Proton acceptor role is filled by aspartate 13. 2 residues coordinate Mg(2+): aspartate 13 and glycine 40. IMP-binding positions include 13-16 (DEGK), 38-41 (NAGH), threonine 128, arginine 142, glutamine 222, threonine 237, and arginine 301. The Proton donor role is filled by histidine 41. 297–303 (VNTGRAR) lines the substrate pocket. GTP contacts are provided by residues arginine 303, 329–331 (KLD), and 411–413 (STS).

Belongs to the adenylosuccinate synthetase family. In terms of assembly, homodimer. Requires Mg(2+) as cofactor.

The protein resides in the cytoplasm. The catalysed reaction is IMP + L-aspartate + GTP = N(6)-(1,2-dicarboxyethyl)-AMP + GDP + phosphate + 2 H(+). It participates in purine metabolism; AMP biosynthesis via de novo pathway; AMP from IMP: step 1/2. In terms of biological role, plays an important role in the de novo pathway of purine nucleotide biosynthesis. Catalyzes the first committed step in the biosynthesis of AMP from IMP. The protein is Adenylosuccinate synthetase of Caulobacter vibrioides (strain ATCC 19089 / CIP 103742 / CB 15) (Caulobacter crescentus).